Reading from the N-terminus, the 207-residue chain is Large ribosomal subunit protein uL4 (207 aa).

The disordered stretch occupies residues 56 to 76; the sequence is EVRGGGRKPWRQKGTGRARAG. The segment covering 60-71 has biased composition (basic residues); that stretch reads GGRKPWRQKGTG.

This sequence belongs to the universal ribosomal protein uL4 family. In terms of assembly, part of the 50S ribosomal subunit.

Its function is as follows. One of the primary rRNA binding proteins, this protein initially binds near the 5'-end of the 23S rRNA. It is important during the early stages of 50S assembly. It makes multiple contacts with different domains of the 23S rRNA in the assembled 50S subunit and ribosome. In terms of biological role, forms part of the polypeptide exit tunnel. The protein is Large ribosomal subunit protein uL4 of Desulfitobacterium hafniense (strain Y51).